Consider the following 651-residue polypeptide: Translation initiation factor eIF2B subunit delta (651 aa).

A disordered region spans residues 1–108; the sequence is MSESEAKSRS…NERNVKKSTL (108 aa). Residue Ser-2 is modified to N-acetylserine. Over residues 11–28 the composition is skewed to low complexity; that stretch reads ATPPSKAKQATPTTTAAA. 2 stretches are compositionally biased toward basic and acidic residues: residues 30–49 and 76–90; these read GEKK…EKAA and KQLQ…EQKQ. At Ser-106 the chain carries Phosphoserine. Thr-121 is subject to Phosphothreonine. The disordered stretch occupies residues 566-600; the sequence is AMENKPKGNKIGGKKGSEGESKDASNEEDSNSKNI. A compositionally biased stretch (basic and acidic residues) spans 580–590; it reads KGSEGESKDAS.

The protein belongs to the eIF-2B alpha/beta/delta subunits family. As to quaternary structure, component of the translation initiation factor 2B (eIF2B) complex which is a heterodecamer of two sets of five different subunits: alpha, beta, gamma, delta and epsilon. Subunits alpha, beta and delta comprise a regulatory subcomplex and subunits epsilon and gamma comprise a catalytic subcomplex. Within the complex, the hexameric regulatory complex resides at the center, with the two heterodimeric catalytic subcomplexes bound on opposite sides.

It is found in the cytoplasm. The protein resides in the cytosol. Acts as a component of the translation initiation factor 2B (eIF2B) complex, which catalyzes the exchange of GDP for GTP on the eukaryotic initiation factor 2 (eIF2) complex gamma subunit. Its guanine nucleotide exchange factor activity is repressed when bound to eIF2 complex phosphorylated on the alpha subunit, thereby limiting the amount of methionyl-initiator methionine tRNA available to the ribosome and consequently global translation is repressed. It activates the synthesis of GCN4 in yeast under amino acid starvation conditions by suppressing the inhibitory effects of multiple AUG codons present in the leader of GCN4 mRNA. It may promote either repression or activation of GCN4 expression depending on amino acid availability. GCD2 is also required for cell viability. Its function can partially be replaced by GCN3 under normal growth conditions in GCD2-defective mutants, under AA starvation conditions GCN3 is an antagonist (GCN4 translational activator). In Saccharomyces cerevisiae (strain ATCC 204508 / S288c) (Baker's yeast), this protein is Translation initiation factor eIF2B subunit delta (GCD2).